The following is a 215-amino-acid chain: 3-demethoxyubiquinol 3-hydroxylase (215 aa).

The Fe cation site is built by Glu-64, Glu-94, His-97, Glu-146, Glu-178, and His-181.

Belongs to the COQ7 family. Fe cation is required as a cofactor.

Its subcellular location is the cell membrane. The enzyme catalyses a 5-methoxy-2-methyl-3-(all-trans-polyprenyl)benzene-1,4-diol + AH2 + O2 = a 3-demethylubiquinol + A + H2O. It participates in cofactor biosynthesis; ubiquinone biosynthesis. In terms of biological role, catalyzes the hydroxylation of 2-nonaprenyl-3-methyl-6-methoxy-1,4-benzoquinol during ubiquinone biosynthesis. This Coxiella burnetii (strain RSA 331 / Henzerling II) protein is 3-demethoxyubiquinol 3-hydroxylase.